A 426-amino-acid polypeptide reads, in one-letter code: Adenylosuccinate synthetase (426 aa).

Residues 18–24 (GDEGKGK) and 46–48 (GHT) each bind GTP. The active-site Proton acceptor is Asp-19. Mg(2+) is bound by residues Asp-19 and Gly-46. IMP contacts are provided by residues 19–22 (DEGK), 44–47 (NAGH), Thr-136, Arg-150, Gln-222, Thr-237, and Arg-301. Residue His-47 is the Proton donor of the active site. Position 297–303 (297–303 (VTTKRKR)) interacts with substrate. Residues Arg-303, 329–331 (KID), and 413–415 (GTG) each bind GTP.

This sequence belongs to the adenylosuccinate synthetase family. Homodimer. It depends on Mg(2+) as a cofactor.

It localises to the cytoplasm. It carries out the reaction IMP + L-aspartate + GTP = N(6)-(1,2-dicarboxyethyl)-AMP + GDP + phosphate + 2 H(+). It functions in the pathway purine metabolism; AMP biosynthesis via de novo pathway; AMP from IMP: step 1/2. Functionally, plays an important role in the de novo pathway and in the salvage pathway of purine nucleotide biosynthesis. Catalyzes the first committed step in the biosynthesis of AMP from IMP. This Schistosoma mansoni (Blood fluke) protein is Adenylosuccinate synthetase.